The sequence spans 414 residues: Putative cytochrome P450 126 (414 aa).

Position 363 (cysteine 363) interacts with heme.

This sequence belongs to the cytochrome P450 family. Heme is required as a cofactor.

The polypeptide is Putative cytochrome P450 126 (cyp126) (Mycobacterium tuberculosis (strain CDC 1551 / Oshkosh)).